We begin with the raw amino-acid sequence, 285 residues long: Short chain dehydrogenase sol3 (285 aa).

3 residues coordinate NADP(+): Leu39, Lys64, and Asp87. Residues Ser168 and Tyr200 each act as proton donor in the active site. The NADP(+) site is built by Tyr200, Lys204, and Ser234. The active-site Lowers pKa of active site Tyr is Lys204.

Belongs to the short-chain dehydrogenases/reductases (SDR) family.

The protein operates within phytotoxin biosynthesis. Short chain dehydrogenase; part of the gene cluster that mediates the biosynthesis of the phytotoxin solanapyrone, a causal agent of early blight disease of potato and tomato. The prosolanapyrone synthase sol1 is a polyketide synthase that produces the octaketide desmethylprosolanapyrone I via sequential condensations of 7 malonyl-CoA units with one acetyl-CoA unit, and one methylation step. The octaketide backbone is further methylated by the sol2 O-methyltransferase to yield prosolanapyrone I. Prosolanapyrone I is hydroxylated to prosolanapyrone II by the cytochrome P450 monooxygenase sol6. The solanapyrone synthase sol5 then catalyzes the oxidation of prosolanapyrone II and the subsequent Diels Alder cycloisomerization of the product prosolanapyrone III to solanapyrones A and D. Solanapyrones A and D are then converted into solanapyrones B and E, respectively, by the sol3 dehydrogenase. The protein is Short chain dehydrogenase sol3 (sol3) of Alternaria solani.